Consider the following 242-residue polypeptide: 7-cyano-7-deazaguanine synthase (242 aa).

The segment at 1 to 22 is disordered; that stretch reads MNSSSNEKNKDLNRKNFSSKTD. 32 to 42 serves as a coordination point for ATP; the sequence is LSGGLDSTTCL. Residues C212, C221, C224, and C227 each contribute to the Zn(2+) site.

This sequence belongs to the QueC family. Requires Zn(2+) as cofactor.

It catalyses the reaction 7-carboxy-7-deazaguanine + NH4(+) + ATP = 7-cyano-7-deazaguanine + ADP + phosphate + H2O + H(+). Its pathway is purine metabolism; 7-cyano-7-deazaguanine biosynthesis. Its function is as follows. Catalyzes the ATP-dependent conversion of 7-carboxy-7-deazaguanine (CDG) to 7-cyano-7-deazaguanine (preQ(0)). This Leptospira interrogans serogroup Icterohaemorrhagiae serovar copenhageni (strain Fiocruz L1-130) protein is 7-cyano-7-deazaguanine synthase.